A 494-amino-acid polypeptide reads, in one-letter code: MPTPILDFDALAQTISGRTVLCIGDIMLDEFVYGEVSRISPEAPTPVIVAQRSEIHIGGAGNVARNVASLGARCIFVGLVGEDDAGKRLAAALADQAAIESVLVCDPSRPTTRKVRFVSEHFSTHMLRADWEQAQPASDEVEAKLIEAILPQIARADIVLLSDYAKGVLTARVIRHTIDAARKLGKPVIVDPKSLNWAIYRGATLLTPNRKEFAEATRSRADTPQSIVDASEDVMRLADCEAILVTQGEHGMTLVPRNGAAVHVPAVPVKVRDVSGAGDTVAAALAVSLAAGADWDTALRVANAAASVAVSKLGTAIVSTAELRRKILPHAYLAAEEKIVLEPAALDAQLAEWRTQGLRVGFTNGCFDILHPGHVKVLTAARGACDRLVVGLNSDASVRRLKGADRPVQDERARAEVLAALEAVDLVVIFEEDTPIDLITRIKPAALVKGGDYTREQVVGHEVVEAAGGVVVLVDILQGFSTTALVHRARGGAK.

The tract at residues 1-334 (MPTPILDFDA…RKILPHAYLA (334 aa)) is ribokinase. 209-212 (NRKE) is a binding site for ATP. Residue Asp-279 is part of the active site. A cytidylyltransferase region spans residues 362–494 (FTNGCFDILH…LVHRARGGAK (133 aa)).

It in the N-terminal section; belongs to the carbohydrate kinase PfkB family. In the C-terminal section; belongs to the cytidylyltransferase family. Homodimer.

The catalysed reaction is D-glycero-beta-D-manno-heptose 7-phosphate + ATP = D-glycero-beta-D-manno-heptose 1,7-bisphosphate + ADP + H(+). The enzyme catalyses D-glycero-beta-D-manno-heptose 1-phosphate + ATP + H(+) = ADP-D-glycero-beta-D-manno-heptose + diphosphate. It functions in the pathway nucleotide-sugar biosynthesis; ADP-L-glycero-beta-D-manno-heptose biosynthesis; ADP-L-glycero-beta-D-manno-heptose from D-glycero-beta-D-manno-heptose 7-phosphate: step 1/4. The protein operates within nucleotide-sugar biosynthesis; ADP-L-glycero-beta-D-manno-heptose biosynthesis; ADP-L-glycero-beta-D-manno-heptose from D-glycero-beta-D-manno-heptose 7-phosphate: step 3/4. Catalyzes the phosphorylation of D-glycero-D-manno-heptose 7-phosphate at the C-1 position to selectively form D-glycero-beta-D-manno-heptose-1,7-bisphosphate. Its function is as follows. Catalyzes the ADP transfer from ATP to D-glycero-beta-D-manno-heptose 1-phosphate, yielding ADP-D-glycero-beta-D-manno-heptose. In Bradyrhizobium diazoefficiens (strain JCM 10833 / BCRC 13528 / IAM 13628 / NBRC 14792 / USDA 110), this protein is Bifunctional protein HldE.